The sequence spans 813 residues: Cadherin-22 (813 aa).

The signal sequence occupies residues methionine 1–alanine 33. Over alanine 34 to proline 621 the chain is Extracellular. Cadherin domains follow at residues tryptophan 61–phenylalanine 165, leucine 166–phenylalanine 274, proline 275–phenylalanine 391, arginine 392–glutamate 495, and leucine 496–phenylalanine 613. Asparagine 159 carries N-linked (GlcNAc...) asparagine glycosylation. Residues asparagine 463 and asparagine 609 are each glycosylated (N-linked (GlcNAc...) asparagine). A helical transmembrane segment spans residues glycine 622–leucine 642. Residues threonine 643–serine 813 lie on the Cytoplasmic side of the membrane. The interval glycine 696 to glutamate 726 is disordered.

In terms of tissue distribution, strongly expressed in the pituitary gland and the brain (in the inner granular and glomerular layers of the olfactory bulb, anterior olfactory nucleus, primary olfactory cortex, Purkinje cell layer of cerebellum, and pineal gland). Low expression in lung and heart. No expression in submandibular gland, thymus, liver, spleen, adrenal, and kidney.

It localises to the cell membrane. Functionally, cadherins are calcium-dependent cell adhesion proteins. They preferentially interact with themselves in a homophilic manner in connecting cells; cadherins may thus contribute to the sorting of heterogeneous cell types. PB-cadherins may have a role in the morphological organization of pituitary gland and brain tissues. The sequence is that of Cadherin-22 (Cdh22) from Rattus norvegicus (Rat).